The sequence spans 339 residues: S-adenosylmethionine:tRNA ribosyltransferase-isomerase (339 aa).

Belongs to the QueA family. Monomer.

It localises to the cytoplasm. The enzyme catalyses 7-aminomethyl-7-carbaguanosine(34) in tRNA + S-adenosyl-L-methionine = epoxyqueuosine(34) in tRNA + adenine + L-methionine + 2 H(+). Its pathway is tRNA modification; tRNA-queuosine biosynthesis. In terms of biological role, transfers and isomerizes the ribose moiety from AdoMet to the 7-aminomethyl group of 7-deazaguanine (preQ1-tRNA) to give epoxyqueuosine (oQ-tRNA). This Campylobacter fetus subsp. fetus (strain 82-40) protein is S-adenosylmethionine:tRNA ribosyltransferase-isomerase.